The chain runs to 395 residues: DNA primase small subunit PriS (395 aa).

Catalysis depends on residues D95, D97, and D302.

This sequence belongs to the eukaryotic-type primase small subunit family. As to quaternary structure, heterodimer of a small subunit (PriS) and a large subunit (PriL). Mg(2+) serves as cofactor. Mn(2+) is required as a cofactor.

Functionally, catalytic subunit of DNA primase, an RNA polymerase that catalyzes the synthesis of short RNA molecules used as primers for DNA polymerase during DNA replication. The small subunit contains the primase catalytic core and has DNA synthesis activity on its own. Binding to the large subunit stabilizes and modulates the activity, increasing the rate of DNA synthesis while decreasing the length of the DNA fragments, and conferring RNA synthesis capability. The DNA polymerase activity may enable DNA primase to also catalyze primer extension after primer synthesis. May also play a role in DNA repair. This chain is DNA primase small subunit PriS, found in Methanothrix thermoacetophila (strain DSM 6194 / JCM 14653 / NBRC 101360 / PT) (Methanosaeta thermophila).